We begin with the raw amino-acid sequence, 393 residues long: Arginine biosynthesis bifunctional protein ArgJ (393 aa).

Residues T143, K168, T179, E265, N388, and T393 each coordinate substrate. T179 acts as the Nucleophile in catalysis.

This sequence belongs to the ArgJ family. As to quaternary structure, heterotetramer of two alpha and two beta chains.

The protein localises to the cytoplasm. The catalysed reaction is N(2)-acetyl-L-ornithine + L-glutamate = N-acetyl-L-glutamate + L-ornithine. The enzyme catalyses L-glutamate + acetyl-CoA = N-acetyl-L-glutamate + CoA + H(+). Its pathway is amino-acid biosynthesis; L-arginine biosynthesis; L-ornithine and N-acetyl-L-glutamate from L-glutamate and N(2)-acetyl-L-ornithine (cyclic): step 1/1. It functions in the pathway amino-acid biosynthesis; L-arginine biosynthesis; N(2)-acetyl-L-ornithine from L-glutamate: step 1/4. Its function is as follows. Catalyzes two activities which are involved in the cyclic version of arginine biosynthesis: the synthesis of N-acetylglutamate from glutamate and acetyl-CoA as the acetyl donor, and of ornithine by transacetylation between N(2)-acetylornithine and glutamate. The polypeptide is Arginine biosynthesis bifunctional protein ArgJ (Syntrophotalea carbinolica (strain DSM 2380 / NBRC 103641 / GraBd1) (Pelobacter carbinolicus)).